We begin with the raw amino-acid sequence, 302 residues long: Dihydroorotate dehydrogenase B (NAD(+)), catalytic subunit (302 aa).

FMN contacts are provided by residues Ser20 and 44–45 (KG). Residues Lys44 and 68–72 (NSVGL) each bind substrate. 2 residues coordinate FMN: Asn98 and Asn125. Position 125 (Asn125) interacts with substrate. Cys128 functions as the Nucleophile in the catalytic mechanism. Residues Lys163 and Ile189 each contribute to the FMN site. A substrate-binding site is contributed by 190–191 (NT). Residues Gly215, 241–242 (GG), and 263–264 (GT) each bind FMN.

Belongs to the dihydroorotate dehydrogenase family. Type 1 subfamily. Heterotetramer of 2 PyrK and 2 PyrD type B subunits. FMN serves as cofactor.

The protein resides in the cytoplasm. It catalyses the reaction (S)-dihydroorotate + NAD(+) = orotate + NADH + H(+). It functions in the pathway pyrimidine metabolism; UMP biosynthesis via de novo pathway; orotate from (S)-dihydroorotate (NAD(+) route): step 1/1. In terms of biological role, catalyzes the conversion of dihydroorotate to orotate with NAD(+) as electron acceptor. The polypeptide is Dihydroorotate dehydrogenase B (NAD(+)), catalytic subunit (pyrD) (Thermoanaerobacter sp. (strain X514)).